We begin with the raw amino-acid sequence, 200 residues long: Recombination protein RecR (200 aa).

The C4-type zinc-finger motif lies at 58-73 (CQVCGNMDTENICGIC). Residues 81–176 (SVIAIVETVA…KISRLASGIP (96 aa)) enclose the Toprim domain.

The protein belongs to the RecR family.

Its function is as follows. May play a role in DNA repair. It seems to be involved in an RecBC-independent recombinational process of DNA repair. It may act with RecF and RecO. This Rickettsia bellii (strain OSU 85-389) protein is Recombination protein RecR.